Here is a 25-residue protein sequence, read N- to C-terminus: Ranatuerin-1C (25 aa).

Cys-19 and Cys-25 are disulfide-bonded.

Expressed by the skin glands.

It is found in the secreted. Its function is as follows. Antibacterial activity against Gram-positive bacterium S.aureus (MIC=55 uM) and Gram-negative bacterium E.coli (MIC=1.5 uM). Has activity against C.albicans (MIC=58 uM). This Lithobates clamitans (Green frog) protein is Ranatuerin-1C.